We begin with the raw amino-acid sequence, 212 residues long: Deoxyribose-phosphate aldolase (212 aa).

The Proton donor/acceptor role is filled by D90. K151 functions as the Schiff-base intermediate with acetaldehyde in the catalytic mechanism. The Proton donor/acceptor role is filled by K176.

It belongs to the DeoC/FbaB aldolase family. DeoC type 1 subfamily.

It localises to the cytoplasm. It carries out the reaction 2-deoxy-D-ribose 5-phosphate = D-glyceraldehyde 3-phosphate + acetaldehyde. It functions in the pathway carbohydrate degradation; 2-deoxy-D-ribose 1-phosphate degradation; D-glyceraldehyde 3-phosphate and acetaldehyde from 2-deoxy-alpha-D-ribose 1-phosphate: step 2/2. Its function is as follows. Catalyzes a reversible aldol reaction between acetaldehyde and D-glyceraldehyde 3-phosphate to generate 2-deoxy-D-ribose 5-phosphate. This chain is Deoxyribose-phosphate aldolase, found in Halobacterium salinarum (strain ATCC 29341 / DSM 671 / R1).